A 106-amino-acid chain; its full sequence is Protein U4 (106 aa).

A helical membrane pass occupies residues Phe5 to Val25.

Belongs to the nanovirus U4 protein family.

Its subcellular location is the membrane. The polypeptide is Protein U4 (DNA-U4) (Cicer arietinum (Chickpea)).